The chain runs to 481 residues: Cysteine--tRNA ligase (481 aa).

C29 serves as a coordination point for Zn(2+). A 'HIGH' region motif is present at residues V31–H41. Positions 209, 234, and 238 each coordinate Zn(2+). A 'KMSKS' region motif is present at residues K266 to S270. Residue K269 participates in ATP binding.

It belongs to the class-I aminoacyl-tRNA synthetase family. In terms of assembly, monomer. Zn(2+) serves as cofactor.

Its subcellular location is the cytoplasm. It carries out the reaction tRNA(Cys) + L-cysteine + ATP = L-cysteinyl-tRNA(Cys) + AMP + diphosphate. In Geobacter sulfurreducens (strain ATCC 51573 / DSM 12127 / PCA), this protein is Cysteine--tRNA ligase.